A 187-amino-acid chain; its full sequence is Rusticyanin (187 aa).

Residues 1–32 (MYTQNTMKKNWYVTVGAAAALAATVGMGTAMA) form the signal peptide. Positions 85–187 (SFEVHDKKNP…TGMFGKIVVK (103 aa)) constitute a Plastocyanin-like domain. Positions 117, 170, 175, and 180 each coordinate Cu cation.

In terms of assembly, monomer. Requires Cu cation as cofactor.

It is found in the periplasm. Functionally, electron carrier from cytochrome c552 to the A-type oxidase. The chain is Rusticyanin (rus) from Acidithiobacillus ferrooxidans (strain ATCC 23270 / DSM 14882 / CIP 104768 / NCIMB 8455) (Ferrobacillus ferrooxidans (strain ATCC 23270)).